The sequence spans 376 residues: Cytochrome b (376 aa).

Transmembrane regions (helical) follow at residues 28-48, 72-94, 107-127, and 169-189; these read YGFL…FLAS, WCFR…LHIL, SWIS…IGYV, and FFVL…IHIF. H78 and H92 together coordinate heme b. Heme b contacts are provided by H173 and H187. An a ubiquinone-binding site is contributed by H192. The next 4 helical transmembrane spans lie at 214–234, 274–294, 317–337, and 340–360; these read LLSL…IQSI, IPSK…LFLL, VPII…CQLP, and IFIL…LFAL.

This sequence belongs to the cytochrome b family. In terms of assembly, the main subunits of complex b-c1 are: cytochrome b, cytochrome c1 and the Rieske protein. Requires heme b as cofactor.

The protein resides in the mitochondrion inner membrane. Functionally, component of the ubiquinol-cytochrome c reductase complex (complex III or cytochrome b-c1 complex) that is part of the mitochondrial respiratory chain. The b-c1 complex mediates electron transfer from ubiquinol to cytochrome c. Contributes to the generation of a proton gradient across the mitochondrial membrane that is then used for ATP synthesis. This chain is Cytochrome b (MT-CYB), found in Plasmodium chabaudi.